The chain runs to 81 residues: Photosystem I iron-sulfur center (81 aa).

2 consecutive 4Fe-4S ferredoxin-type domains span residues 2 to 31 (SHSV…MIPW) and 39 to 68 (IASA…VRVS). Residues C11, C14, C17, C21, C48, C51, C54, and C58 each contribute to the [4Fe-4S] cluster site.

The eukaryotic PSI reaction center is composed of at least 11 subunits. It depends on [4Fe-4S] cluster as a cofactor.

It localises to the plastid. The protein localises to the chloroplast thylakoid membrane. It carries out the reaction reduced [plastocyanin] + hnu + oxidized [2Fe-2S]-[ferredoxin] = oxidized [plastocyanin] + reduced [2Fe-2S]-[ferredoxin]. Its function is as follows. Apoprotein for the two 4Fe-4S centers FA and FB of photosystem I (PSI); essential for photochemical activity. FB is the terminal electron acceptor of PSI, donating electrons to ferredoxin. The C-terminus interacts with PsaA/B/D and helps assemble the protein into the PSI complex. Required for binding of PsaD and PsaE to PSI. PSI is a plastocyanin-ferredoxin oxidoreductase, converting photonic excitation into a charge separation, which transfers an electron from the donor P700 chlorophyll pair to the spectroscopically characterized acceptors A0, A1, FX, FA and FB in turn. This chain is Photosystem I iron-sulfur center, found in Daucus carota (Wild carrot).